We begin with the raw amino-acid sequence, 186 residues long: Peptidyl-tRNA hydrolase (186 aa).

Y14 contributes to the tRNA binding site. The Proton acceptor role is filled by H19. Y61, N63, and N107 together coordinate tRNA.

Belongs to the PTH family. Monomer.

It localises to the cytoplasm. The catalysed reaction is an N-acyl-L-alpha-aminoacyl-tRNA + H2O = an N-acyl-L-amino acid + a tRNA + H(+). In terms of biological role, hydrolyzes ribosome-free peptidyl-tRNAs (with 1 or more amino acids incorporated), which drop off the ribosome during protein synthesis, or as a result of ribosome stalling. Its function is as follows. Catalyzes the release of premature peptidyl moieties from peptidyl-tRNA molecules trapped in stalled 50S ribosomal subunits, and thus maintains levels of free tRNAs and 50S ribosomes. In Helicobacter pylori (strain J99 / ATCC 700824) (Campylobacter pylori J99), this protein is Peptidyl-tRNA hydrolase.